The chain runs to 575 residues: uncharacterized protein (575 aa).

The disordered stretch occupies residues 507 to 536; sequence AHRKVGELNNKKPMTGEKPPPKNKKSPKYK.

This is an uncharacterized protein from Ostreid herpesvirus 1 (isolate France) (OsHV-1).